Reading from the N-terminus, the 469-residue chain is Cysteine protease ATG4 (469 aa).

The segment at 48–99 (KNIKADDHHPQTPPSVLKAETETQEAHDTAQPPNPPTNAPDTPPDSISSSFS) is disordered. Over residues 66-75 (AETETQEAHD) the composition is skewed to basic and acidic residues. Positions 79–90 (PPNPPTNAPDTP) are enriched in pro residues. Residue Cys172 is the Nucleophile of the active site. Residues Asp362 and His364 contribute to the active site. Residues 443–469 (GSSEGRESAIDEVETLSDDDTDTIHEA) form a disordered region. Positions 452-463 (IDEVETLSDDDT) are enriched in acidic residues.

Belongs to the peptidase C54 family. In terms of assembly, interacts with ATG8.

Its subcellular location is the cytoplasm. It is found in the nucleus. The protein resides in the preautophagosomal structure. The catalysed reaction is [protein]-C-terminal L-amino acid-glycyl-phosphatidylethanolamide + H2O = [protein]-C-terminal L-amino acid-glycine + a 1,2-diacyl-sn-glycero-3-phosphoethanolamine. Cysteine protease that plays a key role in cytoplasm to vacuole transport (Cvt) and autophagy by mediating both proteolytic activation and delipidation of ATG8. Required for selective autophagic degradation of the nucleus (nucleophagy) as well as for mitophagy which contributes to regulate mitochondrial quantity and quality by eliminating the mitochondria to a basal level to fulfill cellular energy requirements and preventing excess ROS production. The protease activity is required for proteolytic activation of ATG8: cleaves the C-terminal amino acid of ATG8 to reveal a C-terminal glycine. ATG8 ubiquitin-like activity requires the exposure of the glycine at the C-terminus for its conjugation to phosphatidylethanolamine (PE) and its insertion to membranes, which is necessary for autophagy. The ATG8-PE conjugate mediates tethering between adjacent membranes and stimulates membrane hemifusion, leading to expansion of the autophagosomal membrane during autophagy. In addition to the protease activity, also catalyzes deconjugation of PE-conjugated forms of ATG8 during macroautophagy: ATG8 delipidation is required to release the protein from membranes, which facilitates multiple events during macroautophagy, and especially for efficient autophagosome biogenesis, the assembly of ATG9-containing tubulovesicular clusters into phagophores/autophagosomes, and for the disassembly of PAS-associated ATG components. ATG8 delipidation by ATG4 also recycles ATG8-PE generated on inappropriate membranes to maintain a reservoir of unlipidated ATG8 that is required for autophagosome formation at the PAS. Autophagy is required for proper vegetative growth, asexual/sexual reproduction, and full virulence. Autophagy is particularly involved in the biosynthesis of deoxynivalenol (DON), an important virulence determinant. The polypeptide is Cysteine protease ATG4 (Gibberella zeae (strain ATCC MYA-4620 / CBS 123657 / FGSC 9075 / NRRL 31084 / PH-1) (Wheat head blight fungus)).